The chain runs to 574 residues: Galectin-3-binding protein (574 aa).

The signal sequence occupies residues 1–18; it reads MALLWLLSVFLLVPGTQG. The SRCR domain maps to 24 to 124; sequence MRLVNGASAS…HEKDAGVVCS (101 aa). Disulfide bonds link Cys-49–Cys-113, Cys-62–Cys-123, and Cys-93–Cys-103. N-linked (GlcNAc...) asparagine glycans are attached at residues Asn-69, Asn-96, Asn-102, and Asn-125. A BTB domain is found at 153-221; it reads CDLFIQVTGQ…FYSRRIEVSM (69 aa). The BACK domain maps to 260–360; it reads PLELYEYAQA…MLPQELFELQ (101 aa). N-linked (GlcNAc...) asparagine glycosylation is found at Asn-362, Asn-398, Asn-540, and Asn-569.

In terms of assembly, homodimers and homomultimers. The multimers form ring-like structures with a diameter of 30-40 nm. Binds LGALS1 and LGALS3. Binds ITGB1, COL4A1, COL5A1, COL6A1, FN1 and NID. The unglycosylated form interacts with PDE4DIP; this interaction, which is PDE4DIP isoform-specific, may connect a pericentrosomal complex to the gamma-tubulin ring complex (gamma-TuRC) to promote microtubule assembly and acetylation. In terms of tissue distribution, detected in thyroid (at protein level).

It is found in the secreted. The protein resides in the extracellular space. Its subcellular location is the extracellular matrix. Promotes integrin-mediated cell adhesion. May stimulate host defense against viruses and tumor cells. This Rattus norvegicus (Rat) protein is Galectin-3-binding protein (Lgals3bp).